The chain runs to 32 residues: Beta-1,4-galactosyltransferase 1 (32 aa).

This sequence belongs to the glycosyltransferase 7 family. Mn(2+) is required as a cofactor. Post-translationally, the soluble form derives from the membrane form by proteolytic processing.

The protein resides in the golgi apparatus. It is found in the golgi stack membrane. It localises to the secreted. The protein localises to the cell membrane. Its subcellular location is the cell projection. The protein resides in the filopodium. The enzyme catalyses D-glucose + UDP-alpha-D-galactose = lactose + UDP + H(+). The catalysed reaction is an N-acetyl-beta-D-glucosaminyl derivative + UDP-alpha-D-galactose = a beta-D-galactosyl-(1-&gt;4)-N-acetyl-beta-D-glucosaminyl derivative + UDP + H(+). It catalyses the reaction N-acetyl-D-glucosamine + UDP-alpha-D-galactose = beta-D-galactosyl-(1-&gt;4)-N-acetyl-D-glucosamine + UDP + H(+). It carries out the reaction a beta-D-GlcNAc-(1-&gt;3)-beta-D-Gal-(1-&gt;4)-beta-D-Glc-(1&lt;-&gt;1)-Cer(d18:1(4E)) + UDP-alpha-D-galactose = a neolactoside nLc4Cer(d18:1(4E)) + UDP + H(+). The enzyme catalyses a beta-D-glucosylceramide + UDP-alpha-D-galactose = a beta-D-galactosyl-(1-&gt;4)-beta-D-glucosyl-(1&lt;-&gt;1)-ceramide + UDP + H(+). The catalysed reaction is a neolactoside IV(3)-beta-GlcNAc-nLc4Cer + UDP-alpha-D-galactose = a neolactoside nLc6Cer + UDP + H(+). The protein operates within protein modification; protein glycosylation. In terms of biological role, this protein is responsible for the synthesis of complex-type N-linked oligosaccharides in many glycoproteins as well as the carbohydrate moieties of glycolipids. The polypeptide is Beta-1,4-galactosyltransferase 1 (Rattus norvegicus (Rat)).